A 162-amino-acid polypeptide reads, in one-letter code: Phosphopantetheine adenylyltransferase (162 aa).

S11 contacts substrate. ATP contacts are provided by residues 11–12 (SF) and H19. Residues K43, V76, and R90 each contribute to the substrate site. ATP contacts are provided by residues 91–93 (GLR), E101, and 126–132 (HLYISSS).

The protein belongs to the bacterial CoaD family. In terms of assembly, homohexamer. Mg(2+) is required as a cofactor.

The protein resides in the cytoplasm. It catalyses the reaction (R)-4'-phosphopantetheine + ATP + H(+) = 3'-dephospho-CoA + diphosphate. It functions in the pathway cofactor biosynthesis; coenzyme A biosynthesis; CoA from (R)-pantothenate: step 4/5. In terms of biological role, reversibly transfers an adenylyl group from ATP to 4'-phosphopantetheine, yielding dephospho-CoA (dPCoA) and pyrophosphate. The protein is Phosphopantetheine adenylyltransferase of Streptococcus pneumoniae (strain Taiwan19F-14).